The primary structure comprises 183 residues: Ribosome maturation factor RimM (183 aa).

Positions 105–181 constitute a PRC barrel domain; that stretch reads ANEYHLMDLI…RIEIDPPLGL (77 aa).

The protein belongs to the RimM family. As to quaternary structure, binds ribosomal protein uS19.

It is found in the cytoplasm. In terms of biological role, an accessory protein needed during the final step in the assembly of 30S ribosomal subunit, possibly for assembly of the head region. Essential for efficient processing of 16S rRNA. May be needed both before and after RbfA during the maturation of 16S rRNA. It has affinity for free ribosomal 30S subunits but not for 70S ribosomes. In Thermosynechococcus vestitus (strain NIES-2133 / IAM M-273 / BP-1), this protein is Ribosome maturation factor RimM.